The sequence spans 348 residues: Putative S-adenosyl-L-methionine-dependent methyltransferase Mb3432 (348 aa).

S-adenosyl-L-methionine contacts are provided by residues Asp171 and 200–201 (DL).

This sequence belongs to the UPF0677 family.

Exhibits S-adenosyl-L-methionine-dependent methyltransferase activity. This chain is Putative S-adenosyl-L-methionine-dependent methyltransferase Mb3432, found in Mycobacterium bovis (strain ATCC BAA-935 / AF2122/97).